The primary structure comprises 1361 residues: Zinc finger protein GLI4 (1361 aa).

Residues 185–270 (SSFGHTPLLH…PQPPDHLTDL (86 aa)) are disordered. Polar residues-rich tracts occupy residues 198–208 (TFASRQQGALT) and 227–241 (NKVS…TVNQ). C2H2-type zinc fingers lie at residues 289–314 (TNCH…NNDH), 322–349 (FVCR…MRRH), 355–379 (HKCT…LRSH), 385–410 (YVCD…NRTH), and 416–441 (YICK…KTVH). 6 disordered regions span residues 434-527 (RKHV…TNNI), 556-584 (STVS…GTAE), 647-720 (NERR…LPNL), 787-832 (NAGL…SMNS), 906-946 (QNRE…APGA), and 1134-1230 (DGLH…PKDN). The span at 475–502 (SGREHSDSVSRDQEHCLQTRTIKTEDNM) shows a compositional bias: basic and acidic residues. Residues 506–522 (SSPGGQSSCSSEPSPYG) are compositionally biased toward low complexity. The segment covering 573–584 (QRIHSAETGTAE) has biased composition (basic and acidic residues). Residues 653 to 670 (TSSTLSSAYTSRRSSGIS) show a composition bias toward low complexity. Composition is skewed to polar residues over residues 672–695 (YFSS…SSAD) and 710–720 (EASQHSGLPNL). Positions 805–821 (RASDPVRRTAGIDDKPL) are enriched in basic and acidic residues. Polar residues-rich tracts occupy residues 913–939 (QNLQ…NTPE) and 1142–1164 (YTVQ…SGQA). Residues 1172-1183 (PRPPAAPHPPNR) are compositionally biased toward pro residues.

Belongs to the GLI C2H2-type zinc-finger protein family.

The protein localises to the nucleus. In terms of biological role, has an essential role in the early embryonic patterning of mesoderm and neuroectoderm. The sequence is that of Zinc finger protein GLI4 (gli4) from Xenopus laevis (African clawed frog).